The sequence spans 170 residues: Large ribosomal subunit protein uL18m (170 aa).

It belongs to the universal ribosomal protein uL18 family. Component of the mitochondrial ribosome large subunit (39S) which comprises a 16S rRNA and about 50 distinct proteins.

Its subcellular location is the mitochondrion. The chain is Large ribosomal subunit protein uL18m (mrpl-18) from Caenorhabditis elegans.